The following is a 118-amino-acid chain: Small ribosomal subunit protein uS13 (118 aa).

A disordered region spans residues 91–118; it reads HRRSLPVRGQRTKTNARTRKGPRKPIKA.

It belongs to the universal ribosomal protein uS13 family. As to quaternary structure, part of the 30S ribosomal subunit. Forms a loose heterodimer with protein S19. Forms two bridges to the 50S subunit in the 70S ribosome.

In terms of biological role, located at the top of the head of the 30S subunit, it contacts several helices of the 16S rRNA. In the 70S ribosome it contacts the 23S rRNA (bridge B1a) and protein L5 of the 50S subunit (bridge B1b), connecting the 2 subunits; these bridges are implicated in subunit movement. Contacts the tRNAs in the A and P-sites. The chain is Small ribosomal subunit protein uS13 from Francisella tularensis subsp. tularensis (strain FSC 198).